Consider the following 130-residue polypeptide: Small ribosomal subunit protein uS8 (130 aa).

Belongs to the universal ribosomal protein uS8 family. Part of the 30S ribosomal subunit. Contacts proteins S5 and S12.

Functionally, one of the primary rRNA binding proteins, it binds directly to 16S rRNA central domain where it helps coordinate assembly of the platform of the 30S subunit. This is Small ribosomal subunit protein uS8 from Shigella boydii serotype 18 (strain CDC 3083-94 / BS512).